A 276-amino-acid polypeptide reads, in one-letter code: Large ribosomal subunit protein uL2 (276 aa).

The disordered stretch occupies residues 225-276 (MNPVDHPHGGGEGRAPVGRKHPVTPWGKPAMGAKTRKKRKLSDKLIVKPRNK). Over residues 258 to 276 (KTRKKRKLSDKLIVKPRNK) the composition is skewed to basic residues.

The protein belongs to the universal ribosomal protein uL2 family. Part of the 50S ribosomal subunit. Forms a bridge to the 30S subunit in the 70S ribosome.

Functionally, one of the primary rRNA binding proteins. Required for association of the 30S and 50S subunits to form the 70S ribosome, for tRNA binding and peptide bond formation. It has been suggested to have peptidyltransferase activity; this is somewhat controversial. Makes several contacts with the 16S rRNA in the 70S ribosome. The protein is Large ribosomal subunit protein uL2 of Moorella thermoacetica (strain ATCC 39073 / JCM 9320).